A 350-amino-acid chain; its full sequence is Methionine aminopeptidase 1D, chloroplastic/mitochondrial (350 aa).

Residues 1–49 (MAGVKSLQPRLISSFLGNNSIRSTQPLIHLFRFDLGRRHVSMQLSRTFS) constitute a chloroplast and mitochondrion transit peptide. Residue Gly-50 is modified to N-acetylglycine. Residues 71–90 (RLRPGNVSPRRPVPGHITKP) are disordered. His-180 is a substrate binding site. 3 residues coordinate a divalent metal cation: Asp-197, Asp-208, and His-271. Substrate is bound at residue His-278. The a divalent metal cation site is built by Glu-303 and Glu-334.

It belongs to the peptidase M24A family. Methionine aminopeptidase type 1 subfamily. It depends on Co(2+) as a cofactor. Zn(2+) is required as a cofactor. The cofactor is Mn(2+). Requires Fe(2+) as cofactor. Ubiquitous. Preferentially expressed in green tissues.

The protein localises to the plastid. It is found in the chloroplast. Its subcellular location is the mitochondrion. It carries out the reaction Release of N-terminal amino acids, preferentially methionine, from peptides and arylamides.. Its function is as follows. Removes the N-terminal methionine from nascent proteins. The N-terminal methionine is often cleaved when the second residue in the primary sequence is small and uncharged (Met-Ala-, Cys, Gly, Pro, Ser, Thr, or Val). The sequence is that of Methionine aminopeptidase 1D, chloroplastic/mitochondrial (MAP1D) from Arabidopsis thaliana (Mouse-ear cress).